The sequence spans 346 residues: Serpentine receptor class gamma-20 (346 aa).

A run of 7 helical transmembrane segments spans residues 27-47 (VMLS…SAVL), 69-89 (FFVL…IEVL), 106-128 (PFFF…CLAF), 157-177 (ILAP…WNIL), 212-232 (IPCL…LTML), 254-274 (TMLF…LPGI), and 279-299 (LLIS…ALIL).

It belongs to the nematode receptor-like protein srg family.

Its subcellular location is the membrane. The chain is Serpentine receptor class gamma-20 (srg-20) from Caenorhabditis elegans.